Consider the following 173-residue polypeptide: ATP synthase subunit delta (173 aa).

Belongs to the ATPase delta chain family. As to quaternary structure, F-type ATPases have 2 components, F(1) - the catalytic core - and F(0) - the membrane proton channel. F(1) has five subunits: alpha(3), beta(3), gamma(1), delta(1), epsilon(1). F(0) has three main subunits: a(1), b(2) and c(10-14). The alpha and beta chains form an alternating ring which encloses part of the gamma chain. F(1) is attached to F(0) by a central stalk formed by the gamma and epsilon chains, while a peripheral stalk is formed by the delta and b chains.

Its subcellular location is the cell inner membrane. In terms of biological role, f(1)F(0) ATP synthase produces ATP from ADP in the presence of a proton or sodium gradient. F-type ATPases consist of two structural domains, F(1) containing the extramembraneous catalytic core and F(0) containing the membrane proton channel, linked together by a central stalk and a peripheral stalk. During catalysis, ATP synthesis in the catalytic domain of F(1) is coupled via a rotary mechanism of the central stalk subunits to proton translocation. This protein is part of the stalk that links CF(0) to CF(1). It either transmits conformational changes from CF(0) to CF(1) or is implicated in proton conduction. The polypeptide is ATP synthase subunit delta (Campylobacter jejuni subsp. jejuni serotype O:2 (strain ATCC 700819 / NCTC 11168)).